The sequence spans 322 residues: Eukaryotic translation initiation factor 3 subunit I (322 aa).

5 WD repeats span residues 4 to 43 (GHER…RLGT), 46 to 85 (GHQG…IIAS), 141 to 180 (MTES…KVVD), 184 to 223 (DHTA…CLKT), and 281 to 322 (GHFG…NIFE).

It belongs to the eIF-3 subunit I family. In terms of assembly, component of the eukaryotic translation initiation factor 3 (eIF-3) complex. The eIF-3 complex interacts with pix.

It localises to the cytoplasm. Functionally, component of the eukaryotic translation initiation factor 3 (eIF-3) complex, which is involved in protein synthesis of a specialized repertoire of mRNAs and, together with other initiation factors, stimulates binding of mRNA and methionyl-tRNAi to the 40S ribosome. The eIF-3 complex specifically targets and initiates translation of a subset of mRNAs involved in cell proliferation. In Drosophila ananassae (Fruit fly), this protein is Eukaryotic translation initiation factor 3 subunit I.